Reading from the N-terminus, the 23-residue chain is Acetylcholine receptor subunit gamma (23 aa).

Belongs to the ligand-gated ion channel (TC 1.A.9) family. Acetylcholine receptor (TC 1.A.9.1) subfamily. Gamma/CHRNG sub-subfamily. As to quaternary structure, pentamer of two alpha chains, and one each of the beta, delta, and gamma chains.

It is found in the postsynaptic cell membrane. Its subcellular location is the cell membrane. The enzyme catalyses K(+)(in) = K(+)(out). The catalysed reaction is Na(+)(in) = Na(+)(out). Its function is as follows. After binding acetylcholine, the AChR responds by an extensive change in conformation that affects all subunits and leads to opening of an ion-conducting channel across the plasma membrane. This is Acetylcholine receptor subunit gamma (chrng) from Electrophorus electricus (Electric eel).